We begin with the raw amino-acid sequence, 622 residues long: MIMDTNAVSFRARDEVTTQLAPGTGGQAVPTSNGMMTRFAMSESSLTDLLHKAATQYPNRAAYKFIDYDVNPDGFTETLTWWQIYRRAKIVAEELRGYGASGDRVAVLAPQGLEYIIAFLGVLEAGLIAVPLPVPQFGIHDERISAALQDSTPSVILTTSPVIDEVTKYAPHARAGQGGTPIVVAVDLLDLDSARELDLTPPAHSSTAYLQYTSGSTRSPAGVVLSHKNVITNCVQLMSDYLGETEKVPSTAVSWLPFYHDMGLMLGIILPMINQDTAVLLNPMAFLQRPARWMQLMGKFRGQISCAPNFGFELAVRRTSDEDMAGLDLGHVRGIGSGAERVNPATLQRFIDRFAPFNLRDTAIRPSYGLAEATVFVATAEPGRPPRSVNFDYQSLSVGRVERCANEADDGAKLVSYGSSWTSEVRIVDPEARTECPAGTVGEIWVQGDNVAMGYWRNPQLTERTFDAKLTDPSPGTSIGPWLRTGDLGVMFEGELFITGRIKDLLIVDGSNHYPDDIESTIQEITGGRVVAIAVPDADGEKLVTIVEFASWGHSGQEAIDKLRSVKREITSAISRAHRVRVADVVLVATGSIPVTTSGKVRRSSCAERYRNDGFTRLDRSA.

It belongs to the ATP-dependent AMP-binding enzyme family.

The catalysed reaction is 17-(4-hydroxyphenyl)heptadecanoate + holo-[(phenol)carboxyphthiodiolenone synthase] + ATP = 17-(4-hydroxyphenyl)heptadecanoyl-[(phenol)carboxyphthiodiolenone synthase] + AMP + diphosphate. It carries out the reaction 19-(4-hydroxyphenyl)nonadecanoate + holo-[(phenol)carboxyphthiodiolenone synthase] + ATP = 19-(4-hydroxyphenyl)nonadecanoyl-[(phenol)carboxyphthiodiolenone synthase] + AMP + diphosphate. It functions in the pathway lipid metabolism; fatty acid biosynthesis. Functionally, catalyzes the activation of long-chain fatty acids as acyl-adenylates (acyl-AMP), which are then transferred to the multifunctional polyketide synthase PpsA for further chain extension. Involved in the biosynthesis of phenolphthiocerol, which is an important intermediate in the biosynthesis of phenolic glycolipid (PGL), also called mycosid B. This chain is 4-hydroxyphenylalkanoate adenylyltransferase (fadD29), found in Mycobacterium marinum (strain ATCC BAA-535 / M).